The primary structure comprises 402 residues: uncharacterized protein (402 aa).

12 helical membrane-spanning segments follow: residues 26–46, 67–87, 96–116, 126–146, 168–188, 213–233, 235–255, 289–309, 312–332, 338–358, 360–380, and 381–401; these read IFMS…AIAY, VALA…YVGF, FAAF…LTII, TVSI…NGTL, LFIL…IGFL, YVAY…MIDS, LFLL…GGYG, PIVI…GSII, ISVF…FDSL, FKNI…AVTI, FALL…SFLL, and LYKK…GYLI.

Belongs to the chromate ion transporter (CHR) (TC 2.A.51) family.

It is found in the cell membrane. This is an uncharacterized protein from Methanocaldococcus jannaschii (strain ATCC 43067 / DSM 2661 / JAL-1 / JCM 10045 / NBRC 100440) (Methanococcus jannaschii).